We begin with the raw amino-acid sequence, 622 residues long: Chaperone protein HscA homolog (622 aa).

This sequence belongs to the heat shock protein 70 family.

Functionally, chaperone involved in the maturation of iron-sulfur cluster-containing proteins. Has a low intrinsic ATPase activity which is markedly stimulated by HscB. The sequence is that of Chaperone protein HscA homolog from Burkholderia orbicola (strain MC0-3).